The primary structure comprises 241 residues: Glucosamine-6-phosphate deaminase (241 aa).

Asp67 acts as the Proton acceptor; for enolization step in catalysis. The active-site For ring-opening step is the Asn136. His138 acts as the Proton acceptor; for ring-opening step in catalysis. Residue Glu143 is the For ring-opening step of the active site.

It belongs to the glucosamine/galactosamine-6-phosphate isomerase family. NagB subfamily.

It carries out the reaction alpha-D-glucosamine 6-phosphate + H2O = beta-D-fructose 6-phosphate + NH4(+). The protein operates within amino-sugar metabolism; N-acetylneuraminate degradation; D-fructose 6-phosphate from N-acetylneuraminate: step 5/5. In terms of biological role, catalyzes the reversible isomerization-deamination of glucosamine 6-phosphate (GlcN6P) to form fructose 6-phosphate (Fru6P) and ammonium ion. This Bacillus pumilus (strain SAFR-032) protein is Glucosamine-6-phosphate deaminase.